Consider the following 406-residue polypeptide: Tyrosine--tRNA ligase (406 aa).

The 'HIGH' region motif lies at 48–57 (PSRPDLHLGH). The 'KMSKS' region motif lies at 232-236 (KMSKS). Lysine 235 provides a ligand contact to ATP. Residues 339–401 (MPVVELLMAL…GKRKFFKVAR (63 aa)) enclose the S4 RNA-binding domain.

This sequence belongs to the class-I aminoacyl-tRNA synthetase family. TyrS type 2 subfamily. Homodimer.

The protein resides in the cytoplasm. It catalyses the reaction tRNA(Tyr) + L-tyrosine + ATP = L-tyrosyl-tRNA(Tyr) + AMP + diphosphate + H(+). Catalyzes the attachment of tyrosine to tRNA(Tyr) in a two-step reaction: tyrosine is first activated by ATP to form Tyr-AMP and then transferred to the acceptor end of tRNA(Tyr). The sequence is that of Tyrosine--tRNA ligase from Chlorobaculum tepidum (strain ATCC 49652 / DSM 12025 / NBRC 103806 / TLS) (Chlorobium tepidum).